Here is a 612-residue protein sequence, read N- to C-terminus: Dihydroxy-acid dehydratase (612 aa).

Asp81 serves as a coordination point for Mg(2+). Cys122 contacts [2Fe-2S] cluster. Residues Asp123 and Lys124 each coordinate Mg(2+). Lys124 is modified (N6-carboxylysine). [2Fe-2S] cluster is bound at residue Cys193. Glu489 is a binding site for Mg(2+). Ser515 serves as the catalytic Proton acceptor.

This sequence belongs to the IlvD/Edd family. As to quaternary structure, homodimer. [2Fe-2S] cluster serves as cofactor. It depends on Mg(2+) as a cofactor.

The enzyme catalyses (2R)-2,3-dihydroxy-3-methylbutanoate = 3-methyl-2-oxobutanoate + H2O. It catalyses the reaction (2R,3R)-2,3-dihydroxy-3-methylpentanoate = (S)-3-methyl-2-oxopentanoate + H2O. The protein operates within amino-acid biosynthesis; L-isoleucine biosynthesis; L-isoleucine from 2-oxobutanoate: step 3/4. It functions in the pathway amino-acid biosynthesis; L-valine biosynthesis; L-valine from pyruvate: step 3/4. In terms of biological role, functions in the biosynthesis of branched-chain amino acids. Catalyzes the dehydration of (2R,3R)-2,3-dihydroxy-3-methylpentanoate (2,3-dihydroxy-3-methylvalerate) into 2-oxo-3-methylpentanoate (2-oxo-3-methylvalerate) and of (2R)-2,3-dihydroxy-3-methylbutanoate (2,3-dihydroxyisovalerate) into 2-oxo-3-methylbutanoate (2-oxoisovalerate), the penultimate precursor to L-isoleucine and L-valine, respectively. The chain is Dihydroxy-acid dehydratase from Azotobacter vinelandii (strain DJ / ATCC BAA-1303).